A 161-amino-acid chain; its full sequence is Protein YzcX (161 aa).

The polypeptide is Protein YzcX (yzcX) (Escherichia coli (strain K12)).